The chain runs to 196 residues: Peptidyl-tRNA hydrolase (196 aa).

Residue tyrosine 17 coordinates tRNA. Residue histidine 22 is the Proton acceptor of the active site. TRNA is bound by residues phenylalanine 68, asparagine 70, and asparagine 116.

This sequence belongs to the PTH family. Monomer.

It is found in the cytoplasm. It catalyses the reaction an N-acyl-L-alpha-aminoacyl-tRNA + H2O = an N-acyl-L-amino acid + a tRNA + H(+). Hydrolyzes ribosome-free peptidyl-tRNAs (with 1 or more amino acids incorporated), which drop off the ribosome during protein synthesis, or as a result of ribosome stalling. Its function is as follows. Catalyzes the release of premature peptidyl moieties from peptidyl-tRNA molecules trapped in stalled 50S ribosomal subunits, and thus maintains levels of free tRNAs and 50S ribosomes. The sequence is that of Peptidyl-tRNA hydrolase from Yersinia pestis bv. Antiqua (strain Antiqua).